Here is a 438-residue protein sequence, read N- to C-terminus: MEGDTEIAELESDIRTLRKQLKEKVQQLKTLKKHFQKNCITKLNNNEIARYSRQIILSEIGVQGQLKLKRASVLVVGAGGLGCPSSLYLAGAGVGHIGILDYDEVELTNLHRQLLHTESTVGLTKVDSARDYLQELNSQIEVSTHHTQLTSDNALTILEQYDIVVDATDNVATRYLLNDACVLLKKPLVSGSALQLEGQLTVYNHKSGPCYRCLFPNPPPPETVTNCGDGGVLGAITGVIGALQALETIKIILGNDGVLSGRLLLFDGHQSSFRNLKLRGKKADCVACSDNPSLTKLIDYEQFCSMKATDKDSHLDLLSPEERITVQEYKSIVDSKQRHVLVDVRGANQFEICQLPCSVNVPIEDILKNRRGVTDILGSSESDDEVAVFVVCRRGNDSQLAVRHLAPLFKERGLPTPRDIVGGLHAWTRNVDKEFPIY.

ATP contacts are provided by residues G80, D101, 108 to 112 (TNLHR), K125, and 169 to 170 (DN). Positions 210 and 213 each coordinate Zn(2+). The Glycyl thioester intermediate; for adenylyltransferase activity role is filled by C227. Residues C285 and C288 each contribute to the Zn(2+) site. The Rhodanese domain maps to 335 to 436 (SKQRHVLVDV…WTRNVDKEFP (102 aa)). Residue C392 is the Cysteine persulfide intermediate; for sulfurtransferase activity of the active site.

It in the N-terminal section; belongs to the HesA/MoeB/ThiF family. UBA4 subfamily. Zn(2+) is required as a cofactor.

The protein localises to the cytoplasm. The protein resides in the cytosol. The enzyme catalyses [molybdopterin-synthase sulfur-carrier protein]-C-terminal Gly-Gly + ATP + H(+) = [molybdopterin-synthase sulfur-carrier protein]-C-terminal Gly-Gly-AMP + diphosphate. It catalyses the reaction [molybdopterin-synthase sulfur-carrier protein]-C-terminal Gly-Gly-AMP + S-sulfanyl-L-cysteinyl-[cysteine desulfurase] + AH2 = [molybdopterin-synthase sulfur-carrier protein]-C-terminal-Gly-aminoethanethioate + L-cysteinyl-[cysteine desulfurase] + A + AMP + 2 H(+). It participates in tRNA modification; 5-methoxycarbonylmethyl-2-thiouridine-tRNA biosynthesis. The protein operates within cofactor biosynthesis; molybdopterin biosynthesis. In terms of biological role, plays a central role in 2-thiolation of mcm(5)S(2)U at tRNA wobble positions of cytosolic tRNA(Lys), tRNA(Glu) and tRNA(Gln). Also essential during biosynthesis of the molybdenum cofactor. Acts by mediating the C-terminal thiocarboxylation of sulfur carriers URM1 and MOCS2A. Its N-terminus first activates URM1 and MOCS2A as acyl-adenylates (-COAMP), then the persulfide sulfur on the catalytic cysteine is transferred to URM1 and MOCS2A to form thiocarboxylation (-COSH) of their C-terminus. The reaction probably involves hydrogen sulfide that is generated from the persulfide intermediate and that acts as a nucleophile towards URM1 and MOCS2A. Subsequently, a transient disulfide bond is formed. Does not use thiosulfate as sulfur donor; NFS1 probably acting as a sulfur donor for thiocarboxylation reactions. The protein is Adenylyltransferase and sulfurtransferase MOCS3 of Culex quinquefasciatus (Southern house mosquito).